Here is a 547-residue protein sequence, read N- to C-terminus: MTKTASEILNNPFLNKGTAFTKEERQALGLTGTLPSKVQTIDEQATQAYAQFKSKPSRLEQRIFLMNLFNENRTLFFHLMDEHVVEFMPIVYDPVVADSIEQYNELFLDPQNAAFVSVDAPEDIEATLKNAADGRDIRLVVVTDAEGILGMGDWGVNGVDIAIGKLMVYTAAAGIDPSQVLPVSIDAGTNNQKLLDDPLYLGNRHKCVSGEQYYDVIDKFVAAEQQLFPDSLLHFEDFGRDNAQVILDKYKDQIATFNDDIQGTGMVVLAGILGALNISKESIKDQKILSFGAGTAGMGIANQILDELMQAGLTEEEAKQHFYAVDKQGLLFDDTEGLTPAQKAFTRKRSEFSNADELTNLEAVVKAVHPTVMIGTSTQPGTFTESIIKEMAAHTERPIIFPLSNPTKLAEAKAEDLIKWTDGRALVATGIPADDVEYKGVTYQIGQGNNALMYPGLGFGLIASTAKVLNAETLSAACHALGGIVDTSKPGAAVLPPVAKITEFSQKLAEVVAQSVIDQKLNKEPIADAKQAVADMKWVPEYRAISK.

Tyrosine 92 functions as the Proton donor in the catalytic mechanism. Catalysis depends on lysine 165, which acts as the Proton acceptor. Lysine 165 contributes to the substrate binding site. Residues glutamate 236, aspartate 237, and aspartate 260 each coordinate Mn(2+). Residues 293–296 (AGTA), asparagine 405, and asparagine 450 contribute to the NAD(+) site. Residue asparagine 450 participates in substrate binding.

Belongs to the malic enzymes family. In terms of assembly, homodimer. It depends on Mn(2+) as a cofactor. The cofactor is NAD(+).

It carries out the reaction (S)-malate + H(+) = (S)-lactate + CO2. In terms of biological role, involved in the malolactic fermentation (MLF) of wine, which results in a natural decrease in acidity and favorable changes in wine flavors. Catalyzes the decarboxylation of L-malate to L-lactate. The polypeptide is Malolactic enzyme (Lactiplantibacillus plantarum (strain ATCC BAA-793 / NCIMB 8826 / WCFS1) (Lactobacillus plantarum)).